The chain runs to 474 residues: Glutamate--tRNA ligase (474 aa).

A 'HIGH' region motif is present at residues 9–19 (PSPTGLLHMGG). A 'KMSKS' region motif is present at residues 238–242 (KLSKR). Residue lysine 241 participates in ATP binding.

The protein belongs to the class-I aminoacyl-tRNA synthetase family. Glutamate--tRNA ligase type 1 subfamily. As to quaternary structure, monomer.

The protein resides in the cytoplasm. It carries out the reaction tRNA(Glu) + L-glutamate + ATP = L-glutamyl-tRNA(Glu) + AMP + diphosphate. Catalyzes the attachment of glutamate to tRNA(Glu) in a two-step reaction: glutamate is first activated by ATP to form Glu-AMP and then transferred to the acceptor end of tRNA(Glu). The polypeptide is Glutamate--tRNA ligase (Buchnera aphidicola subsp. Cinara cedri (strain Cc)).